A 612-amino-acid chain; its full sequence is Alpha-glycerophosphate oxidase (612 aa).

21 to 49 (DLLIIGGGITGAGVALQAAASGLDTGLIE) lines the FAD pocket. The segment covering 398 to 408 (VETSTSEKELD) has biased composition (basic and acidic residues). A disordered region spans residues 398-418 (VETSTSEKELDPSAVSRGSSF).

The protein belongs to the FAD-dependent glycerol-3-phosphate dehydrogenase family. The cofactor is FAD.

Its subcellular location is the cytoplasm. It carries out the reaction sn-glycerol 3-phosphate + O2 = dihydroxyacetone phosphate + H2O2. The protein is Alpha-glycerophosphate oxidase (glpO) of Streptococcus pyogenes serotype M18 (strain MGAS8232).